Consider the following 157-residue polypeptide: 2-C-methyl-D-erythritol 2,4-cyclodiphosphate synthase (157 aa).

Residues aspartate 9 and histidine 11 each contribute to the a divalent metal cation site. 4-CDP-2-C-methyl-D-erythritol 2-phosphate is bound by residues aspartate 9 to histidine 11 and histidine 35 to serine 36. Residue histidine 43 coordinates a divalent metal cation. Residues aspartate 57 to glycine 59, phenylalanine 62 to aspartate 66, alanine 101 to alanine 107, threonine 133 to glutamate 136, phenylalanine 140, and arginine 143 contribute to the 4-CDP-2-C-methyl-D-erythritol 2-phosphate site.

It belongs to the IspF family. Homotrimer. A divalent metal cation is required as a cofactor.

It carries out the reaction 4-CDP-2-C-methyl-D-erythritol 2-phosphate = 2-C-methyl-D-erythritol 2,4-cyclic diphosphate + CMP. It functions in the pathway isoprenoid biosynthesis; isopentenyl diphosphate biosynthesis via DXP pathway; isopentenyl diphosphate from 1-deoxy-D-xylulose 5-phosphate: step 4/6. In terms of biological role, involved in the biosynthesis of isopentenyl diphosphate (IPP) and dimethylallyl diphosphate (DMAPP), two major building blocks of isoprenoid compounds. Catalyzes the conversion of 4-diphosphocytidyl-2-C-methyl-D-erythritol 2-phosphate (CDP-ME2P) to 2-C-methyl-D-erythritol 2,4-cyclodiphosphate (ME-CPP) with a corresponding release of cytidine 5-monophosphate (CMP). In Listeria monocytogenes serotype 4a (strain HCC23), this protein is 2-C-methyl-D-erythritol 2,4-cyclodiphosphate synthase.